We begin with the raw amino-acid sequence, 682 residues long: Potassium-transporting ATPase ATP-binding subunit (682 aa).

4 consecutive transmembrane segments (helical) span residues 34–54 (PVMF…LAMV), 58–78 (IAGS…TVLF), 219–239 (IALT…TATL), and 254–274 (VLVA…LSAI). D307 acts as the 4-aspartylphosphate intermediate in catalysis. ATP-binding positions include D344, E348, 377–384 (FTAQSRMS), and K395. Mg(2+) contacts are provided by D518 and D522. 3 helical membrane-spanning segments follow: residues 588–608 (FAII…LNVM), 616–636 (AILS…PLAL), and 662–682 (LVVP…LGLA).

This sequence belongs to the cation transport ATPase (P-type) (TC 3.A.3) family. Type IA subfamily. As to quaternary structure, the system is composed of three essential subunits: KdpA, KdpB and KdpC.

Its subcellular location is the cell inner membrane. The enzyme catalyses K(+)(out) + ATP + H2O = K(+)(in) + ADP + phosphate + H(+). Its function is as follows. Part of the high-affinity ATP-driven potassium transport (or Kdp) system, which catalyzes the hydrolysis of ATP coupled with the electrogenic transport of potassium into the cytoplasm. This subunit is responsible for energy coupling to the transport system and for the release of the potassium ions to the cytoplasm. This is Potassium-transporting ATPase ATP-binding subunit from Salmonella newport (strain SL254).